A 365-amino-acid chain; its full sequence is Cyclin-O protein B (365 aa).

Residues 22–64 form a disordered region; sequence SGKRKRDSVYSPGDATPGDRGEGEPKCPSVGTKKRAKYSRHRK. Residues 53-64 are compositionally biased toward basic residues; it reads TKKRAKYSRHRK.

The protein belongs to the cyclin family.

It localises to the cytoplasm. Functionally, specifically required for generation of multiciliated cells, possibly by promoting a cell cycle state compatible with centriole amplification and maturation. Acts downstream of mcidas to promote mother centriole amplification and maturation in preparation for apical docking. This chain is Cyclin-O protein B (ccno-b), found in Xenopus laevis (African clawed frog).